A 372-amino-acid chain; its full sequence is Histidine protein methyltransferase 1 homolog (372 aa).

Disordered stretches follow at residues 30-55 (SKEL…QFDL) and 68-103 (NAAP…AKEH). Over residues 39 to 49 (QKGEERDRKCS) the composition is skewed to basic and acidic residues. Over residues 70–87 (APSQDTDSPLSAASSSRN) the composition is skewed to polar residues. Residues serine 72 and serine 77 each carry the phosphoserine modification. Histidine 154 is modified (tele-methylhistidine; by autocatalysis). Residues 168–172 (IWECT), glycine 195, and 216–218 (QDY) each bind S-adenosyl-L-methionine. The Nuclear localization signal motif lies at 247 to 253 (PDVKRCR). S-adenosyl-L-methionine is bound by residues 268–270 (GEW) and serine 293.

The protein belongs to the methyltransferase superfamily. METTL18 family. Interacts with GRWD1 and members of the heat shock protein 90 and 70 families; these proteins may possibly be methylation substrates for the enzyme. In terms of processing, monomethylated at His-154 through automethylation. Automethylation at His-154 positively regulates the methyltransferase activity toward RPL3. Probably methylated on other residues.

Its subcellular location is the cytoplasm. The protein resides in the cytosol. It is found in the nucleus. The protein localises to the nucleolus. It catalyses the reaction L-histidyl-[protein] + S-adenosyl-L-methionine = N(tele)-methyl-L-histidyl-[protein] + S-adenosyl-L-homocysteine + H(+). Protein-L-histidine N-tele-methyltransferase that specifically monomethylates RPL3, thereby regulating translation elongation. Histidine methylation of RPL3 regulates translation elongation by slowing ribosome traversal on tyrosine codons: slower elongation provides enough time for proper folding of synthesized proteins and prevents cellular aggregation of tyrosine-rich proteins. In Homo sapiens (Human), this protein is Histidine protein methyltransferase 1 homolog.